A 535-amino-acid chain; its full sequence is Beta-amylase 1, chloroplastic (535 aa).

A chloroplast-targeting transit peptide spans 1 to 36; it reads MALNLAQSAAAAACFATAGDARRAASVVAMPSSSSS. Substrate contacts are provided by D115, H155, and D163. E247 acts as the Proton donor in catalysis. Residues K361, H366, and T408 each contribute to the substrate site. E446 (proton acceptor) is an active-site residue. Substrate contacts are provided by residues 447-448 and R480; that span reads NA.

The protein belongs to the glycosyl hydrolase 14 family.

Its subcellular location is the plastid. The protein resides in the chloroplast. The catalysed reaction is Hydrolysis of (1-&gt;4)-alpha-D-glucosidic linkages in polysaccharides so as to remove successive maltose units from the non-reducing ends of the chains.. In terms of biological role, possesses beta-amylase activity in vitro. May be involved in cold resistance by mediating the accumulation of maltose upon freezing stress, thus contributing to the protection of membranes. This chain is Beta-amylase 1, chloroplastic, found in Oryza sativa subsp. japonica (Rice).